A 213-amino-acid chain; its full sequence is Protein GrpE (213 aa).

The span at 1 to 23 (MSDEKKPEAETSESLQKREEKLA) shows a compositional bias: basic and acidic residues. The interval 1–43 (MSDEKKPEAETSESLQKREEKLAETLASEPAAQGEAEDAAAAG) is disordered. Positions 29-43 (EPAAQGEAEDAAAAG) are enriched in low complexity.

The protein belongs to the GrpE family. Homodimer.

The protein localises to the cytoplasm. Functionally, participates actively in the response to hyperosmotic and heat shock by preventing the aggregation of stress-denatured proteins, in association with DnaK and GrpE. It is the nucleotide exchange factor for DnaK and may function as a thermosensor. Unfolded proteins bind initially to DnaJ; upon interaction with the DnaJ-bound protein, DnaK hydrolyzes its bound ATP, resulting in the formation of a stable complex. GrpE releases ADP from DnaK; ATP binding to DnaK triggers the release of the substrate protein, thus completing the reaction cycle. Several rounds of ATP-dependent interactions between DnaJ, DnaK and GrpE are required for fully efficient folding. This Parvibaculum lavamentivorans (strain DS-1 / DSM 13023 / NCIMB 13966) protein is Protein GrpE.